Here is a 33-residue protein sequence, read N- to C-terminus: Large ribosomal subunit protein uL24 (33 aa).

The protein belongs to the universal ribosomal protein uL24 family. As to quaternary structure, component of the large ribosomal subunit.

It is found in the cytoplasm. Component of the large ribosomal subunit. The ribosome is a large ribonucleoprotein complex responsible for the synthesis of proteins in the cell. The protein is Large ribosomal subunit protein uL24 (rpl26) of Xenopus laevis (African clawed frog).